Consider the following 467-residue polypeptide: H(+)/Cl(-) exchange transporter ClcA (467 aa).

At 1–30 (MTKRERIIQSVLVKVPKDAINQFLSHGSTP) the chain is on the cytoplasmic side. The chain crosses the membrane as a helical span at residues 31 to 67 (ISVLFLAALVGVLAGLVGTYFEIAVHFVSETRTEWLK). At 68–74 (SEIGHLL) the chain is on the periplasmic side. Residues 75–98 (PLWLAAILISAALAFVGYFLVHRF) form a helical membrane-spanning segment. The short motif at 104–108 (GSGIP) is the Selectivity filter part_1 element. A chloride-binding site is contributed by Ser105. Positions 107–114 (IPEIEGAM) form an intramembrane region, helical. The Cytoplasmic segment spans residues 115-121 (DNIRPVR). Helical transmembrane passes span 122 to 139 (WWRV…ALGS) and 146 to 164 (EGPT…TDIF). Positions 144 to 148 (GREGP) match the Selectivity filter part_2 motif. Topologically, residues 165-174 (RVKDDDTRHS) are cytoplasmic. 2 intramembrane regions (helical) span residues 175–187 (LLAS…LAAA) and 191–199 (PLAGIMFVV). Over 200–212 (EEMRPQFRYSLIS) the chain is Cytoplasmic. Residues 213 to 230 (IRAVIISAVMANIVFRAI) traverse the membrane as a helical segment. The Periplasmic segment spans residues 231-250 (NGQDAVITMPQYQPPELKAL). Residues 251-279 (WLFLLLGGLFGVFGVLFNKLVTVAQDAFV) form a helical membrane-spanning segment. Residues 280-285 (ALHKND) lie on the Cytoplasmic side of the membrane. Residues 286 to 307 (RKRYLITGTCLGGIFGLLLLYV) form a helical membrane-spanning segment. At 308–327 (PELTGGGIHLIPDVTNGNYS) the chain is on the periplasmic side. A run of 2 helical transmembrane segments spans residues 328-347 (VSLL…ICFG) and 353-374 (GIFA…ATAK). Positions 353 to 357 (GIFAP) match the Selectivity filter part_3 motif. Residues Ile354 and Phe355 each coordinate chloride. Over 375-384 (ILLPDLPIEP) the chain is Periplasmic. Positions 385–399 (GMFAIAGMGALFAAT) form an intramembrane region, helical. The note=Loop between two helices intramembrane region spans 400–402 (VRA). The helical intramembrane region spans 403 to 414 (PITGILLVIEMT). An intramembrane region (note=Loop between two helices) is located at residues 415 to 419 (NNYYL). A helical membrane pass occupies residues 420-436 (ILPLIITSLGAVICAQI). The Cytoplasmic portion of the chain corresponds to 437–467 (CGGKPIYSQLLHRTIKNDKLRQQDLPEQQNS). Residue Tyr443 coordinates chloride.

This sequence belongs to the chloride channel (TC 2.A.49) family. ClcA subfamily. In terms of assembly, homodimer.

Its subcellular location is the cell inner membrane. The catalysed reaction is 2 chloride(in) + H(+)(out) = 2 chloride(out) + H(+)(in). Its function is as follows. Proton-coupled chloride transporter. Functions as antiport system and exchanges two chloride ions for 1 proton. Probably acts as an electrical shunt for an outwardly-directed proton pump that is linked to amino acid decarboxylation, as part of the extreme acid resistance (XAR) response. The protein is H(+)/Cl(-) exchange transporter ClcA of Vibrio vulnificus (strain CMCP6).